The following is a 602-amino-acid chain: Adenylosuccinate synthetase (602 aa).

Residues 74 to 80 (GDEGKGK) and 104 to 106 (GHT) each bind GTP. Aspartate 75 acts as the Proton acceptor in catalysis. Mg(2+) is bound by residues aspartate 75 and glycine 104. Residues 75-78 (DEGK), 102-105 (NAGH), threonine 189, lysine 203, glutamine 315, threonine 331, and lysine 459 each bind IMP. Histidine 105 (proton donor) is an active-site residue. Position 455 to 461 (455 to 461 (AVTKKPR)) interacts with substrate. GTP-binding positions include arginine 461 and 589–591 (GNG).

Belongs to the adenylosuccinate synthetase family. In terms of assembly, homodimer. Requires Mg(2+) as cofactor.

It is found in the cytoplasm. It carries out the reaction IMP + L-aspartate + GTP = N(6)-(1,2-dicarboxyethyl)-AMP + GDP + phosphate + 2 H(+). Its pathway is purine metabolism; AMP biosynthesis via de novo pathway; AMP from IMP: step 1/2. In terms of biological role, plays an important role in the salvage pathway for purine nucleotide biosynthesis. Catalyzes the first committed step in the biosynthesis of AMP from IMP. The protein is Adenylosuccinate synthetase of Trypanosoma brucei gambiense (strain MHOM/CI/86/DAL972).